Reading from the N-terminus, the 506-residue chain is Chaperone SurA (506 aa).

Positions 1–29 are cleaved as a signal peptide; sequence MMRRLHSSRRFSGSLLALALGLALPLAHA. PpiC domains are found at residues 219 to 320 and 351 to 450; these read PVML…KVLQ and VTQT…QVLE.

The protein resides in the periplasm. The enzyme catalyses [protein]-peptidylproline (omega=180) = [protein]-peptidylproline (omega=0). Chaperone involved in the correct folding and assembly of outer membrane proteins. Recognizes specific patterns of aromatic residues and the orientation of their side chains, which are found more frequently in integral outer membrane proteins. May act in both early periplasmic and late outer membrane-associated steps of protein maturation. The sequence is that of Chaperone SurA from Bordetella avium (strain 197N).